The sequence spans 76 residues: Accessory gland-specific peptide 57Dc (76 aa).

A signal peptide spans 1–20 (MHGTHFLILLLLCGVLGSNG).

Post-translationally, cAMP-dependent phosphorylation. In terms of tissue distribution, lumen fluid of male accessory glands, becomes seminal fluid.

Its subcellular location is the secreted. In terms of biological role, transferred from male to female during mating and may affect egglaying and behavior after mating. The chain is Accessory gland-specific peptide 57Dc (Mst57Dc) from Drosophila melanogaster (Fruit fly).